The sequence spans 483 residues: Putative (R)-citramalate synthase CimA (483 aa).

The Pyruvate carboxyltransferase domain maps to 1 to 245 (MRDGEQTPGV…DTGIKHEQIY (245 aa)).

Belongs to the alpha-IPM synthase/homocitrate synthase family. In terms of assembly, homodimer.

It catalyses the reaction pyruvate + acetyl-CoA + H2O = (3R)-citramalate + CoA + H(+). The protein operates within amino-acid biosynthesis; L-isoleucine biosynthesis; 2-oxobutanoate from pyruvate: step 1/3. Functionally, catalyzes the condensation of pyruvate and acetyl-coenzyme A to form (R)-citramalate. This Methanosarcina acetivorans (strain ATCC 35395 / DSM 2834 / JCM 12185 / C2A) protein is Putative (R)-citramalate synthase CimA.